The sequence spans 314 residues: Inactive chitinase-like protein 1 (314 aa).

The first 19 residues, 1–19 (MKEIVRALEGYGPPKDKAA), serve as a signal peptide directing secretion. Positions 20 to 60 (EQCGWQAGGALCPGGLCCSQYGWCANTPEYCGSGCQSQCDG) constitute a Chitin-binding type-1 domain. Intrachain disulfides connect cysteine 22/cysteine 37, cysteine 31/cysteine 43, cysteine 36/cysteine 50, cysteine 54/cysteine 58, cysteine 92/cysteine 154, cysteine 166/cysteine 174, and cysteine 273/cysteine 305.

The protein belongs to the glycosyl hydrolase 19 family. Chitinase class I subfamily.

Its function is as follows. Inactive chitinase-like protein that does not exhibit hydrolytic activity toward chitin. Binds strongly to chitin and possesses antifungal activity toward the fungal pathogen Altenaria alternata in plate assays. Inhibits the growth of Fusarium oxysporum on plate assays. Probably involved in defense against fungal pathogens through a mechanism that only involves carbohydrate binding. The chain is Inactive chitinase-like protein 1 from Hevea brasiliensis (Para rubber tree).